The primary structure comprises 404 residues: Acyl-[acyl-carrier-protein] desaturase 7, chloroplastic (404 aa).

A chloroplast-targeting transit peptide spans 1-39; it reads MAASATTSTLAVTMFGYPNRNCHLKPPATATLRFWRSAA. The Fe cation site is built by E138, E176, H179, E229, E262, and H265.

The protein belongs to the fatty acid desaturase type 2 family. In terms of assembly, homodimer. Fe(2+) serves as cofactor.

It is found in the plastid. The protein localises to the chloroplast. It functions in the pathway lipid metabolism; fatty acid metabolism. In terms of biological role, introduces a cis double bond in the acyl chain of an acyl-[acyl-carrier protein]. In Oryza sativa subsp. indica (Rice), this protein is Acyl-[acyl-carrier-protein] desaturase 7, chloroplastic.